The primary structure comprises 359 residues: Fc receptor-like A (359 aa).

The N-terminal stretch at 1–27 is a signal peptide; the sequence is MKLGCVLMAWALYLSLGVLWVAQMLLA. 2 Ig-like C2-type domains span residues 70–159 and 170–257; these read PFHL…ETAS and PAPI…PQLE. Intrachain disulfides connect Cys99-Cys143 and Cys192-Cys240. The tract at residues 259–313 is disordered; that stretch reads RVQGASSSAAPPTLNPAPQKSAAPGTAPEEAPGPLPPPPTPSSEDPGFSSPLGMP. Low complexity predominate over residues 279 to 288; the sequence is SAAPGTAPEE. The segment covering 289-299 has biased composition (pro residues); it reads APGPLPPPPTP.

As to quaternary structure, monomer or homodimer; disulfide-linked. Expressed specifically in primary and secondary lymphoid tissues like lymph node, spleen and tonsil. Specifically expressed in B-cells with a high level in normal germinal center B-cells, centroblasts and in a subset of diffuse large B-cell lymphomas. Highly expressed in bone marrow B-cells and weakly in earlier B lineage cells. Expressed in pre-germinal and germinal center B-cells in secondary lymphoid tissues. Also expressed in melanoma and melanocytes.

It localises to the cytoplasm. In terms of biological role, may be implicated in B-cell differentiation and lymphomagenesis. This chain is Fc receptor-like A (FCRLA), found in Homo sapiens (Human).